A 399-amino-acid polypeptide reads, in one-letter code: Methylthioribose kinase (399 aa).

Residues N40, K57, and 111–113 (EDL) contribute to the ATP site. D229 lines the substrate pocket. Residue 246 to 248 (DAE) coordinates ATP. R344 serves as a coordination point for substrate.

This sequence belongs to the methylthioribose kinase family. In terms of assembly, homodimer.

It carries out the reaction 5-(methylsulfanyl)-D-ribose + ATP = 5-(methylsulfanyl)-alpha-D-ribose 1-phosphate + ADP + H(+). It participates in amino-acid biosynthesis; L-methionine biosynthesis via salvage pathway; S-methyl-5-thio-alpha-D-ribose 1-phosphate from S-methyl-5'-thioadenosine (hydrolase route): step 2/2. In terms of biological role, catalyzes the phosphorylation of methylthioribose into methylthioribose-1-phosphate. The chain is Methylthioribose kinase from Cronobacter sakazakii (strain ATCC BAA-894) (Enterobacter sakazakii).